The following is a 495-amino-acid chain: Probable cytosol aminopeptidase (495 aa).

Positions 266 and 271 each coordinate Mn(2+). Residue Lys278 is part of the active site. Mn(2+)-binding residues include Asp289, Asp348, and Glu350. Residue Arg352 is part of the active site.

This sequence belongs to the peptidase M17 family. It depends on Mn(2+) as a cofactor.

The protein localises to the cytoplasm. It catalyses the reaction Release of an N-terminal amino acid, Xaa-|-Yaa-, in which Xaa is preferably Leu, but may be other amino acids including Pro although not Arg or Lys, and Yaa may be Pro. Amino acid amides and methyl esters are also readily hydrolyzed, but rates on arylamides are exceedingly low.. The enzyme catalyses Release of an N-terminal amino acid, preferentially leucine, but not glutamic or aspartic acids.. Presumably involved in the processing and regular turnover of intracellular proteins. Catalyzes the removal of unsubstituted N-terminal amino acids from various peptides. The protein is Probable cytosol aminopeptidase of Pseudomonas paraeruginosa (strain DSM 24068 / PA7) (Pseudomonas aeruginosa (strain PA7)).